We begin with the raw amino-acid sequence, 548 residues long: MAAKDVKFGNEARIKMLRGVNVLADAVKVTLGPKGRNVVLDKSFGAPSITKDGVSVAREIELEDKFENMGAQMVKEVASKANDAAGDGTTTATLLAQSIVNEGLKAVAAGMNPMDLKRGIDKAVISAVEELKHLSVPCSDSKAITQVGTISANADEKVGSLIAEAMEKVGNDGVITVEEGTGLQDELEVVKGMQFDRGYLSPYFINKPETGIVELENPYILMADKKISNVREMLPILESVAKSGKPLLIISEDLEGEALATLVVNSMRGIVKVAAVKAPGFGDRRKAMLQDISILTGGSVISEELAMELEKSTLEDLGQAKRVVISKDTTTIIGGVGEKHSIQSRISQIRQEIQEATSDYDKEKLNERLAKLSGGVAVLKVGAATEVEMKEKKARVEDALHATRAAVEEGVVAGGGVALVRVAGKIADLRGQNEDQNVGIRVALRAMEAPLRQIVSNSGEEPSVVTNNVKDGKGNYGYNAATDKYGDMIDFGILDPTKVTRSALQYAASVAGLMITTECMVTDLPKEDKSSDSSSSPAGGMGGMGGMM.

Residues 30 to 33 (TLGP), Lys-51, 87 to 91 (DGTTT), Gly-415, 479 to 481 (NAA), and Asp-495 each bind ATP. The disordered stretch occupies residues 524–548 (LPKEDKSSDSSSSPAGGMGGMGGMM). A compositionally biased stretch (gly residues) spans 539–548 (GGMGGMGGMM).

This sequence belongs to the chaperonin (HSP60) family. Forms a cylinder of 14 subunits composed of two heptameric rings stacked back-to-back. Interacts with the co-chaperonin GroES.

Its subcellular location is the cytoplasm. It carries out the reaction ATP + H2O + a folded polypeptide = ADP + phosphate + an unfolded polypeptide.. Together with its co-chaperonin GroES, plays an essential role in assisting protein folding. The GroEL-GroES system forms a nano-cage that allows encapsulation of the non-native substrate proteins and provides a physical environment optimized to promote and accelerate protein folding. The sequence is that of Chaperonin GroEL from Buchnera aphidicola subsp. Acyrthosiphon pisum (strain Tuc7).